The sequence spans 362 residues: Glutamate 5-kinase (362 aa).

Lys-3 lines the ATP pocket. Substrate-binding residues include Ser-43, Asp-128, and Asn-140. ATP contacts are provided by residues 160–161 (TD) and 202–208 (TGGMRTK). One can recognise a PUA domain in the interval 267-348 (PGTILIDAGA…REIEPILGYS (82 aa)).

Belongs to the glutamate 5-kinase family.

The protein localises to the cytoplasm. The enzyme catalyses L-glutamate + ATP = L-glutamyl 5-phosphate + ADP. It functions in the pathway amino-acid biosynthesis; L-proline biosynthesis; L-glutamate 5-semialdehyde from L-glutamate: step 1/2. Catalyzes the transfer of a phosphate group to glutamate to form L-glutamate 5-phosphate. The sequence is that of Glutamate 5-kinase from Xanthomonas campestris pv. campestris (strain 8004).